The sequence spans 279 residues: Large ribosomal subunit protein mL46 (279 aa).

Lys230 bears the N6-acetyllysine mark.

This sequence belongs to the mitochondrion-specific ribosomal protein mL46 family. Component of the mitochondrial ribosome large subunit (39S) which comprises a 16S rRNA and about 50 distinct proteins.

It localises to the mitochondrion. The chain is Large ribosomal subunit protein mL46 (MRPL46) from Pongo abelii (Sumatran orangutan).